Here is a 485-residue protein sequence, read N- to C-terminus: Keratin, type I cytoskeletal 14 (485 aa).

The span at 1 to 15 (MATCSRQFTSSSSMK) shows a compositional bias: polar residues. The disordered stretch occupies residues 1-21 (MATCSRQFTSSSSMKGSCGIG). The segment at 1–121 (MATCSRQFTS…GLGDGLLVGS (121 aa)) is head. The coil 1A stretch occupies residues 122 to 157 (EKVTMQNLNDRLATYLDKVRALEEANSDLEVKIRDW). The IF rod domain maps to 122 to 433 (EKVTMQNLND…RLLEGEDAHL (312 aa)). The linker 1 stretch occupies residues 158–175 (YQRQRPTEIKDYSPYFKT). Residues 176–267 (IEDLKSKILA…KNHEEEMASM (92 aa)) form a coil 1B region. Positions 268–290 (RGQVGGDVNVEMDAAPGVDLSRI) are linker 12. Residues 291-429 (LNEMRDQYEK…ATYRRLLEGE (139 aa)) are coil 2. The tail stretch occupies residues 430–485 (DAHLSSAQFSSSSQFSSGSQSSRDVTSTNRQIRTKVMDVHDGKVVSTHEQVLRTKN). The interval 432–485 (HLSSAQFSSSSQFSSGSQSSRDVTSTNRQIRTKVMDVHDGKVVSTHEQVLRTKN) is interaction with Type I keratins and keratin filaments. Over residues 437 to 451 (QFSSSSQFSSGSQSS) the composition is skewed to low complexity. Residues 437-458 (QFSSSSQFSSGSQSSRDVTSTN) form a disordered region. Residue Ser-448 is modified to Phosphoserine.

The protein belongs to the intermediate filament family. In terms of assembly, heterotetramer of two type I and two type II keratins. Forms a disulfide-linked heterodimer (via 2B domains) with KRT5 (via 2B domains). Forms a heterodimer with KRT1; the interaction is more abundant in the absence of KRT5. Interacts with TRADD and with keratin filaments. Associates with other type I keratins. Interacts with EPPK1. Interacts with KLHL24. Interacts with PKP1 (via N-terminus) and PKP2. Post-translationally, a disulfide bond is formed between rather than within filaments and promotes the formation of a keratin filament cage around the nucleus. Ubiquitinated by the BCR(KLHL24) E3 ubiquitin ligase complex. Expressed in most cells of squamous cell carcinomas, in spinous and suprabasal cells around the branching papillary region of papillomas, and weakly in a few proliferative cells of hyperplastic tissue.

Its subcellular location is the cytoplasm. The protein resides in the nucleus. Its function is as follows. The nonhelical tail domain is involved in promoting KRT5-KRT14 filaments to self-organize into large bundles and enhances the mechanical properties involved in resilience of keratin intermediate filaments in vitro. In Rattus norvegicus (Rat), this protein is Keratin, type I cytoskeletal 14 (Krt14).